The sequence spans 430 residues: Glutamate-1-semialdehyde 2,1-aminomutase (430 aa).

Lysine 267 is modified (N6-(pyridoxal phosphate)lysine).

This sequence belongs to the class-III pyridoxal-phosphate-dependent aminotransferase family. HemL subfamily. In terms of assembly, homodimer. Pyridoxal 5'-phosphate is required as a cofactor.

Its subcellular location is the cytoplasm. The catalysed reaction is (S)-4-amino-5-oxopentanoate = 5-aminolevulinate. Its pathway is porphyrin-containing compound metabolism; protoporphyrin-IX biosynthesis; 5-aminolevulinate from L-glutamyl-tRNA(Glu): step 2/2. The chain is Glutamate-1-semialdehyde 2,1-aminomutase from Cytophaga hutchinsonii (strain ATCC 33406 / DSM 1761 / CIP 103989 / NBRC 15051 / NCIMB 9469 / D465).